The following is a 1453-amino-acid chain: NK-tumor recognition protein (1453 aa).

Positions 10 to 175 (HFDIEINREP…ADVRVIDCGV (166 aa)) constitute a PPIase cyclophilin-type domain. The segment at 187–625 (KKRKKPTCSE…RWKPGQKPWK (439 aa)) is disordered. Positions 195–213 (SEGSDSSSRSSSSSESSSE) are enriched in low complexity. Positions 221–240 (IRRRRHKRRPKVRHAKKRRK) are enriched in basic residues. The segment covering 259 to 286 (YSERSDVNEKRSVDSNTKREKPVVRPEE) has biased composition (basic and acidic residues). Lysine 323 is covalently cross-linked (Glycyl lysine isopeptide (Lys-Gly) (interchain with G-Cter in SUMO2)). Positions 329 to 348 (SGRKIKGRGTIRYHTPPRSR) are enriched in basic residues. Phosphoserine is present on residues serine 379, serine 401, and serine 416. Residues 382 to 402 (KWSKGDKLSDPCSSRWDERSL) are compositionally biased toward basic and acidic residues. The span at 403–421 (SQRSRSWSYNGYYSDLSTA) shows a compositional bias: polar residues. Residues 425–460 (DGHHKKHRKEKKFKHKKKAKKQKHCRRHRQTKKRRI) are compositionally biased toward basic residues. Over residues 514–531 (SSRDSYRSKSHSRSDSRG) the composition is skewed to basic and acidic residues. 2 stretches are compositionally biased toward low complexity: residues 532 to 546 (SSRSRAVSKSSSRSL) and 554 to 565 (SSRSGPRRTSIS). Residues lysine 576 and lysine 579 each participate in a glycyl lysine isopeptide (Lys-Gly) (interchain with G-Cter in SUMO2) cross-link. Serine 611 carries the phosphoserine modification. Lysine 637 is covalently cross-linked (Glycyl lysine isopeptide (Lys-Gly) (interchain with G-Cter in SUMO2)). Serine 646 is subject to Phosphoserine. The segment covering 651–661 (TNIKATVSSSS) has biased composition (polar residues). The segment at 651–1453 (TNIKATVSSS…RSPSESSRYS (803 aa)) is disordered. Residues lysine 654 and lysine 664 each participate in a glycyl lysine isopeptide (Lys-Gly) (interchain with G-Cter in SUMO2) cross-link. 2 stretches are compositionally biased toward low complexity: residues 682-726 (RSSG…SSRS) and 736-749 (SQHSRSSSYTSVSS). Positions 755–772 (AMFRSNRKKSVTSHKRHR) are enriched in basic residues. Positions 773 to 789 (SNSEKTLHSKYVRGREK) are enriched in basic and acidic residues. Positions 799–809 (SRSSLDYSSDS) are enriched in low complexity. Basic and acidic residues-rich tracts occupy residues 820–852 (PEKEKQGKVEALNDKQGKGREEGKPKPEWECPR) and 859–868 (KDHSRDDSVS). A phosphoserine mark is found at serine 880, serine 882, serine 884, and serine 900. Basic and acidic residues predominate over residues 887–902 (DVTKSRKSDPRRGSEK). Acidic residues predominate over residues 903-913 (EEGEASSDSES). Residues 948-958 (SSASESESSCS) show a composition bias toward low complexity. A compositionally biased stretch (basic and acidic residues) spans 966–982 (EPQKQKHSKDDLKGDHT). Residues 983-1005 (KRAREKSKAKKDKKHKAPKRKQA) are compositionally biased toward basic residues. Positions 1030–1045 (DPKEKRHVSEKCEAVK) are enriched in basic and acidic residues. Phosphoserine is present on residues serine 1139 and serine 1148. A compositionally biased stretch (polar residues) spans 1170–1180 (QESSMSESKTL). The segment covering 1189–1199 (SSTSVTSPVET) has biased composition (low complexity). Position 1195 is a phosphoserine (serine 1195). Residues lysine 1208 and lysine 1249 each participate in a glycyl lysine isopeptide (Lys-Gly) (interchain with G-Cter in SUMO2) cross-link. The arg/Ser tandem repeat-rich stretch occupies residues 1303–1453 (RSPHRSRSKS…RSPSESSRYS (151 aa)). Residues 1322-1346 (SVSYSHSRSRSRSSTSSYRSRSYSR) are compositionally biased toward low complexity. Residues 1369–1379 (HSHRTSSRSRS) show a composition bias toward basic residues. Residues 1380-1401 (RSSSYDLHSRSRSYTYDSYYSR) show a composition bias toward low complexity. Basic residues predominate over residues 1416–1426 (RGRSYNRRSRS).

The protein localises to the cell membrane. It carries out the reaction [protein]-peptidylproline (omega=180) = [protein]-peptidylproline (omega=0). Its activity is regulated as follows. Inhibited by cyclosporin A (CsA). PPIase that catalyzes the cis-trans isomerization of proline imidic peptide bonds in oligopeptides and may therefore assist protein folding. Component of a putative tumor-recognition complex involved in the function of NK cells. This chain is NK-tumor recognition protein, found in Mus musculus (Mouse).